We begin with the raw amino-acid sequence, 138 residues long: Putative pre-16S rRNA nuclease (138 aa).

The protein belongs to the YqgF nuclease family.

The protein resides in the cytoplasm. Could be a nuclease involved in processing of the 5'-end of pre-16S rRNA. This chain is Putative pre-16S rRNA nuclease, found in Geobacillus thermodenitrificans (strain NG80-2).